The primary structure comprises 706 residues: G2/M phase-specific E3 ubiquitin-protein ligase (706 aa).

The segment at 11 to 51 (NLACVFCRKHDDCPNKYGEKKTKEKWNLTVHYYCLLMSSGI) adopts a C2HC pre-PHD-type zinc-finger fold. The segment at 79-128 (LKCCVCKKNGASIGCVAPRCKRSYHFPCGLQRECIFQFTGNFASFCWDHR) adopts a PHD-type 1 zinc-finger fold. A PHD-type 2; degenerate zinc finger spans residues 143-193 (PCTICLEFIEPIPSYNILRSPCCKNAWFHRDCLQVQAINAGVFFFRCTICN). A PHD-type 3 zinc finger spans residues 237 to 286 (RCRCKEGRDYNAPDSKWEIKRCQCCGSSGTHLACSSLRSWEQNWECLECR). One can recognise an HECT domain in the interval 371 to 698 (IWNSALDAFR…IRNTLRLEKE (328 aa)).

As to expression, predominantly expressed in brain, liver, kidney, testes and ovary.

It is found in the nucleus. The protein localises to the nucleolus. Its subcellular location is the cytoplasm. It carries out the reaction S-ubiquitinyl-[E2 ubiquitin-conjugating enzyme]-L-cysteine + [acceptor protein]-L-lysine = [E2 ubiquitin-conjugating enzyme]-L-cysteine + N(6)-ubiquitinyl-[acceptor protein]-L-lysine.. Its pathway is protein modification; protein ubiquitination. Its function is as follows. E3 ubiquitin-protein ligase which accepts ubiquitin from an E2 ubiquitin-conjugating enzyme in the form of a thioester and then directly transfers the ubiquitin to targeted substrates. Essential in early embryonic development to prevent apoptotic death. The polypeptide is G2/M phase-specific E3 ubiquitin-protein ligase (G2E3) (Homo sapiens (Human)).